The following is a 397-amino-acid chain: CCA-adding enzyme (397 aa).

G26 and R29 together coordinate ATP. CTP is bound by residues G26 and R29. The Mg(2+) site is built by D39 and D41. The ATP site is built by R110, D153, R156, R159, and R162. CTP is bound by residues R110, D153, R156, R159, and R162.

The protein belongs to the tRNA nucleotidyltransferase/poly(A) polymerase family. Bacterial CCA-adding enzyme type 3 subfamily. As to quaternary structure, homodimer. It depends on Mg(2+) as a cofactor.

It carries out the reaction a tRNA precursor + 2 CTP + ATP = a tRNA with a 3' CCA end + 3 diphosphate. The enzyme catalyses a tRNA with a 3' CCA end + 2 CTP + ATP = a tRNA with a 3' CCACCA end + 3 diphosphate. Its function is as follows. Catalyzes the addition and repair of the essential 3'-terminal CCA sequence in tRNAs without using a nucleic acid template. Adds these three nucleotides in the order of C, C, and A to the tRNA nucleotide-73, using CTP and ATP as substrates and producing inorganic pyrophosphate. tRNA 3'-terminal CCA addition is required both for tRNA processing and repair. Also involved in tRNA surveillance by mediating tandem CCA addition to generate a CCACCA at the 3' terminus of unstable tRNAs. While stable tRNAs receive only 3'-terminal CCA, unstable tRNAs are marked with CCACCA and rapidly degraded. This Bacillus mycoides (strain KBAB4) (Bacillus weihenstephanensis) protein is CCA-adding enzyme.